We begin with the raw amino-acid sequence, 161 residues long: Regulatory protein RecX (161 aa).

This sequence belongs to the RecX family.

It localises to the cytoplasm. In terms of biological role, modulates RecA activity. The protein is Regulatory protein RecX of Halorhodospira halophila (strain DSM 244 / SL1) (Ectothiorhodospira halophila (strain DSM 244 / SL1)).